Consider the following 333-residue polypeptide: MVKVGINGFGRIGRLVTRAAFLTKKVEIVAINDPFIDLDYMVYMFQYDSTHGKYKGEVKAEGGKLVIDGHAITVYSERDPANIKWGDAGATYVVESTGVFTTIEKASAHIKGGAKRVIISAPSADAPMFVMGVNHEKYDNSLTVVSNASCTTNCLAPLAKVINDNFVIVEGLMSTVHAITATQKTVDGPSGKLWRDGRGASQNIIPASTGAAKAVGKVIPELNGKLTGMAFRVPTPNVSVVDLTVRLEKPAKYDEIKKVVKAAADGPMKGILGYTEHQVVSTDFNGDCRSSIFDAGAGIALNDHFVKLVTWYDNEFGYSNRVCDLMAHMASKE.

Residues 11–12 (RI), Asp-33, Arg-78, and Ser-120 each bind NAD(+). Residues 149–151 (SCT), Thr-180, 209–210 (TG), and Arg-232 contribute to the D-glyceraldehyde 3-phosphate site. Cys-150 (nucleophile) is an active-site residue. The residue at position 150 (Cys-150) is an S-nitrosocysteine. Residue Asn-314 participates in NAD(+) binding.

This sequence belongs to the glyceraldehyde-3-phosphate dehydrogenase family. As to quaternary structure, homotetramer. Post-translationally, S-nitrosylation of Cys-150 leads to translocation to the nucleus.

It localises to the cytoplasm. It is found in the cytosol. The protein resides in the cytoskeleton. Its subcellular location is the nucleus. The enzyme catalyses D-glyceraldehyde 3-phosphate + phosphate + NAD(+) = (2R)-3-phospho-glyceroyl phosphate + NADH + H(+). It catalyses the reaction S-nitroso-L-cysteinyl-[GAPDH] + L-cysteinyl-[protein] = L-cysteinyl-[GAPDH] + S-nitroso-L-cysteinyl-[protein]. Its pathway is carbohydrate degradation; glycolysis; pyruvate from D-glyceraldehyde 3-phosphate: step 1/5. In terms of biological role, has both glyceraldehyde-3-phosphate dehydrogenase and nitrosylase activities, thereby playing a role in glycolysis and nuclear functions, respectively. Glyceraldehyde-3-phosphate dehydrogenase is a key enzyme in glycolysis that catalyzes the first step of the pathway by converting D-glyceraldehyde 3-phosphate (G3P) into 3-phospho-D-glyceroyl phosphate. Participates in nuclear events including transcription, RNA transport, DNA replication and apoptosis. Nuclear functions are probably due to the nitrosylase activity that mediates cysteine S-nitrosylation of nuclear target proteins such as SIRT1, HDAC2 and PRKDC. This Danio rerio (Zebrafish) protein is Glyceraldehyde-3-phosphate dehydrogenase.